The following is a 108-amino-acid chain: MSSAQFDHVTVIKKSNVYFGGLCISHTVQFEDGTKKTLGVILPTEQPLTFETHVPERMEIISGECRVKIADSTESELFRAGQSFYVPGNSLFKIETDEVLDYVCHLEG.

It belongs to the nucleoside phosphorylase PpnP family.

It carries out the reaction a purine D-ribonucleoside + phosphate = a purine nucleobase + alpha-D-ribose 1-phosphate. It catalyses the reaction adenosine + phosphate = alpha-D-ribose 1-phosphate + adenine. The enzyme catalyses cytidine + phosphate = cytosine + alpha-D-ribose 1-phosphate. The catalysed reaction is guanosine + phosphate = alpha-D-ribose 1-phosphate + guanine. It carries out the reaction inosine + phosphate = alpha-D-ribose 1-phosphate + hypoxanthine. It catalyses the reaction thymidine + phosphate = 2-deoxy-alpha-D-ribose 1-phosphate + thymine. The enzyme catalyses uridine + phosphate = alpha-D-ribose 1-phosphate + uracil. The catalysed reaction is xanthosine + phosphate = alpha-D-ribose 1-phosphate + xanthine. In terms of biological role, catalyzes the phosphorolysis of diverse nucleosides, yielding D-ribose 1-phosphate and the respective free bases. Can use uridine, adenosine, guanosine, cytidine, thymidine, inosine and xanthosine as substrates. Also catalyzes the reverse reactions. In Acinetobacter baylyi (strain ATCC 33305 / BD413 / ADP1), this protein is Pyrimidine/purine nucleoside phosphorylase.